Consider the following 597-residue polypeptide: Elongation factor 4 (597 aa).

One can recognise a tr-type G domain in the interval 2-184 (KNIRNFSIIA…EIVAKIPAPT (183 aa)). GTP contacts are provided by residues 14–19 (DHGKST) and 131–134 (NKID).

It belongs to the TRAFAC class translation factor GTPase superfamily. Classic translation factor GTPase family. LepA subfamily.

It is found in the cell inner membrane. It catalyses the reaction GTP + H2O = GDP + phosphate + H(+). Functionally, required for accurate and efficient protein synthesis under certain stress conditions. May act as a fidelity factor of the translation reaction, by catalyzing a one-codon backward translocation of tRNAs on improperly translocated ribosomes. Back-translocation proceeds from a post-translocation (POST) complex to a pre-translocation (PRE) complex, thus giving elongation factor G a second chance to translocate the tRNAs correctly. Binds to ribosomes in a GTP-dependent manner. The chain is Elongation factor 4 from Neisseria meningitidis serogroup C (strain 053442).